The primary structure comprises 167 residues: Arginine repressor (167 aa).

Belongs to the ArgR family.

It is found in the cytoplasm. It participates in amino-acid biosynthesis; L-arginine biosynthesis [regulation]. In terms of biological role, regulates arginine biosynthesis genes. The protein is Arginine repressor of Mycobacterium leprae (strain Br4923).